Consider the following 1045-residue polypeptide: Tyrosine-protein kinase-like otk (1045 aa).

Positions 1-25 are cleaved as a signal peptide; that stretch reads MPIVMDMNMLLMLSLAFTVMAPASA. 5 Ig-like C2-type domains span residues 26–116, 115–200, 260–373, 376–469, and 474–564; these read SSSR…AKLS, LSVI…RVMS, PEGL…APVN, PGAL…VAIN, and PRFS…VRLL. Topologically, residues 26–587 are extracellular; it reads SSSRFTQPPQ…AGDGFLVTRA (562 aa). 4 disulfide bridges follow: cysteine 49/cysteine 97, cysteine 139/cysteine 189, cysteine 285/cysteine 362, and cysteine 406/cysteine 453. 8 N-linked (GlcNAc...) asparagine glycosylation sites follow: asparagine 344, asparagine 424, asparagine 435, asparagine 442, asparagine 450, asparagine 463, asparagine 518, and asparagine 530. A disulfide bridge connects residues cysteine 496 and cysteine 548. The helical transmembrane segment at 588–608 threads the bilayer; that stretch reads VLITMTVALAYIVLVVGLMLW. The Cytoplasmic portion of the chain corresponds to 609–1045; it reads CRYRRQARKA…LSKAMQAAEK (437 aa). A disordered region spans residues 628–676; sequence AGGDQAESGKNTEQEPCLSKQRNGHGKSRTAANGDAQKSDDTACSQQSK. Phosphoserine is present on serine 681. Residues 695–1040 form the Protein kinase; inactive domain; the sequence is LSELIQIGRG…QLGAALSKAM (346 aa). Positions 722–790 are disordered; sequence ASPSDKDADT…QPQEQAQSES (69 aa). The span at 725–736 shows a compositional bias: basic and acidic residues; that stretch reads SDKDADTEKQHS. A compositionally biased stretch (gly residues) spans 743 to 752; it reads GASGASGCGS. The span at 771–782 shows a compositional bias: acidic residues; that stretch reads DDIEEIKEEEQP.

This sequence belongs to the protein kinase superfamily. Tyr protein kinase family. Insulin receptor subfamily. As to quaternary structure, interacts with plexA; component of a receptor complex that mediates the repulsive signaling in response to Semaphorin ligands.

The protein resides in the cell membrane. Acts as a calcium-dependent, homophilic cell adhesion molecule that regulates neural recognition during the development of the nervous system. Component of the repulsive Plexin signaling response to regulate motor axon guidance at the embryonic stage. Also component of a receptor complex that is required in the adult visual system to innervate the lamina layer; specific targeting of R1-R6 axons. This Drosophila mojavensis (Fruit fly) protein is Tyrosine-protein kinase-like otk.